We begin with the raw amino-acid sequence, 1083 residues long: RecBCD enzyme subunit RecB (1083 aa).

One can recognise a UvrD-like helicase ATP-binding domain in the interval 1–323 (MKVFDLLGPL…QTLGTNWRSD (323 aa)). The tract at residues 1–704 (MKVFDLLGPL…RGRAPGEAIV (704 aa)) is DNA-binding and helicase activity, interacts with RecC. 21-28 (ASAGTGKT) lines the ATP pocket. The region spanning 349-607 (VQARHQGHRL…QIMTVWVSKG (259 aa)) is the UvrD-like helicase C-terminal domain. The tract at residues 765 to 1083 (AWKRTSYSGL…LSKLLDAEAP (319 aa)) is nuclease activity, interacts with RecD and RecA. Mg(2+) is bound by residues histidine 830, aspartate 962, and aspartate 975. The active-site For nuclease activity is aspartate 975.

This sequence belongs to the helicase family. UvrD subfamily. In terms of assembly, heterotrimer of RecB, RecC and RecD. All subunits contribute to DNA-binding. Interacts with RecA. It depends on Mg(2+) as a cofactor.

The catalysed reaction is Exonucleolytic cleavage (in the presence of ATP) in either 5'- to 3'- or 3'- to 5'-direction to yield 5'-phosphooligonucleotides.. It catalyses the reaction Couples ATP hydrolysis with the unwinding of duplex DNA by translocating in the 3'-5' direction.. The enzyme catalyses ATP + H2O = ADP + phosphate + H(+). Its function is as follows. A helicase/nuclease that prepares dsDNA breaks (DSB) for recombinational DNA repair. Binds to DSBs and unwinds DNA via a highly rapid and processive ATP-dependent bidirectional helicase activity. Holoenzyme degrades any linearized DNA that is unable to undergo homologous recombination. In the holoenzyme this subunit contributes DNA-dependent ATPase activity, exonuclease activity and 3'-5' helicase activity. Unlike the case in E.coli, suppresses RecA-dependent homologous recombination, is instead required for single-strand annealing pathway repair of DSB. The polypeptide is RecBCD enzyme subunit RecB (Mycolicibacterium smegmatis (strain ATCC 700084 / mc(2)155) (Mycobacterium smegmatis)).